The chain runs to 345 residues: Adenine deaminase (345 aa).

His20, His22, and His204 together coordinate Zn(2+). The active-site Proton donor is the Glu207. A Zn(2+)-binding site is contributed by Asp285. Asp286 contributes to the substrate binding site.

This sequence belongs to the metallo-dependent hydrolases superfamily. Adenosine and AMP deaminases family. Adenine deaminase type 2 subfamily. The cofactor is Zn(2+).

It carries out the reaction adenine + H2O + H(+) = hypoxanthine + NH4(+). Catalyzes the hydrolytic deamination of adenine to hypoxanthine. Plays an important role in the purine salvage pathway and in nitrogen catabolism. This is Adenine deaminase from Ralstonia pickettii (strain 12J).